Consider the following 337-residue polypeptide: Inositol 2-dehydrogenase (337 aa).

Belongs to the Gfo/Idh/MocA family. Homotetramer.

It carries out the reaction myo-inositol + NAD(+) = scyllo-inosose + NADH + H(+). Involved in the oxidation of myo-inositol (MI) to 2-keto-myo-inositol (2KMI or 2-inosose). This is Inositol 2-dehydrogenase from Arthrobacter sp. (strain FB24).